Here is a 333-residue protein sequence, read N- to C-terminus: Transcription initiation factor IIB (333 aa).

A TFIIB-type zinc finger spans residues 33–64 (EVYRCPICGNDRFVYNYERGEIVCIVCGAVVQ). Zn(2+) is bound by residues cysteine 37, cysteine 40, cysteine 56, and cysteine 59. 2 consecutive repeat copies span residues 149–232 (QELE…LREL) and 243–324 (LYIS…ELAK).

The protein belongs to the TFIIB family.

Its function is as follows. Stabilizes TBP binding to an archaeal box-A promoter. Also responsible for recruiting RNA polymerase II to the pre-initiation complex (DNA-TBP-TFIIB). The sequence is that of Transcription initiation factor IIB from Pyrobaculum islandicum (strain DSM 4184 / JCM 9189 / GEO3).